We begin with the raw amino-acid sequence, 236 residues long: 2-C-methyl-D-erythritol 4-phosphate cytidylyltransferase (236 aa).

This sequence belongs to the IspD/TarI cytidylyltransferase family. IspD subfamily. In terms of assembly, homodimer.

It catalyses the reaction 2-C-methyl-D-erythritol 4-phosphate + CTP + H(+) = 4-CDP-2-C-methyl-D-erythritol + diphosphate. It participates in isoprenoid biosynthesis; isopentenyl diphosphate biosynthesis via DXP pathway; isopentenyl diphosphate from 1-deoxy-D-xylulose 5-phosphate: step 2/6. Catalyzes the formation of 4-diphosphocytidyl-2-C-methyl-D-erythritol from CTP and 2-C-methyl-D-erythritol 4-phosphate (MEP). The sequence is that of 2-C-methyl-D-erythritol 4-phosphate cytidylyltransferase from Salmonella typhimurium (strain LT2 / SGSC1412 / ATCC 700720).